A 253-amino-acid polypeptide reads, in one-letter code: tRNA pseudouridine synthase A (253 aa).

The Nucleophile role is filled by D53. Y111 is a binding site for substrate.

Belongs to the tRNA pseudouridine synthase TruA family. In terms of assembly, homodimer.

It carries out the reaction uridine(38/39/40) in tRNA = pseudouridine(38/39/40) in tRNA. Functionally, formation of pseudouridine at positions 38, 39 and 40 in the anticodon stem and loop of transfer RNAs. In Chlorobium luteolum (strain DSM 273 / BCRC 81028 / 2530) (Pelodictyon luteolum), this protein is tRNA pseudouridine synthase A.